A 497-amino-acid polypeptide reads, in one-letter code: Probable malate:quinone oxidoreductase (497 aa).

This sequence belongs to the MQO family. Requires FAD as cofactor.

The enzyme catalyses (S)-malate + a quinone = a quinol + oxaloacetate. It participates in carbohydrate metabolism; tricarboxylic acid cycle; oxaloacetate from (S)-malate (quinone route): step 1/1. This Bacillus cereus (strain ATCC 14579 / DSM 31 / CCUG 7414 / JCM 2152 / NBRC 15305 / NCIMB 9373 / NCTC 2599 / NRRL B-3711) protein is Probable malate:quinone oxidoreductase.